We begin with the raw amino-acid sequence, 184 residues long: ATP synthase subunit b, chloroplastic (184 aa).

A helical transmembrane segment spans residues 27–49 (LATNPINLSVVLGVLIFFGKGVL).

The protein belongs to the ATPase B chain family. In terms of assembly, F-type ATPases have 2 components, F(1) - the catalytic core - and F(0) - the membrane proton channel. F(1) has five subunits: alpha(3), beta(3), gamma(1), delta(1), epsilon(1). F(0) has four main subunits: a(1), b(1), b'(1) and c(10-14). The alpha and beta chains form an alternating ring which encloses part of the gamma chain. F(1) is attached to F(0) by a central stalk formed by the gamma and epsilon chains, while a peripheral stalk is formed by the delta, b and b' chains.

It is found in the plastid. It localises to the chloroplast thylakoid membrane. Functionally, f(1)F(0) ATP synthase produces ATP from ADP in the presence of a proton or sodium gradient. F-type ATPases consist of two structural domains, F(1) containing the extramembraneous catalytic core and F(0) containing the membrane proton channel, linked together by a central stalk and a peripheral stalk. During catalysis, ATP synthesis in the catalytic domain of F(1) is coupled via a rotary mechanism of the central stalk subunits to proton translocation. In terms of biological role, component of the F(0) channel, it forms part of the peripheral stalk, linking F(1) to F(0). In Chloranthus spicatus (Chulantree), this protein is ATP synthase subunit b, chloroplastic.